Here is a 104-residue protein sequence, read N- to C-terminus: MTQVAKNDHRLMQVLLAPVVSEKATLVADKNEQVVFEVARDANKAEVKAAVELLFKVEVQSVQILNQKGKQKRFGRFMGRRNHVKKAYVSLKPGQEINFEAEAK.

Belongs to the universal ribosomal protein uL23 family. Part of the 50S ribosomal subunit. Contacts protein L29, and trigger factor when it is bound to the ribosome.

One of the early assembly proteins it binds 23S rRNA. One of the proteins that surrounds the polypeptide exit tunnel on the outside of the ribosome. Forms the main docking site for trigger factor binding to the ribosome. This is Large ribosomal subunit protein uL23 from Cupriavidus metallidurans (strain ATCC 43123 / DSM 2839 / NBRC 102507 / CH34) (Ralstonia metallidurans).